The sequence spans 104 residues: Protein E7 (104 aa).

The interval 1-49 (MRGNAPTLKDIILYDLPTCDPTTCDTPPVDLYCYEQFDTSDEDDEDDDQ) is E7 terminal domain. The LXCXE motif; interaction with host RB1 and TMEM173/STING motif lies at 31–35 (LYCYE). The segment at 64–100 (CTQCGRSVKLVVSSTGADIQQLHQMLLDTLGIVCPLC) is a zinc-finger region. The Nuclear export signal signature appears at 82–90 (IQQLHQMLL).

The protein belongs to the papillomaviridae E7 protein family. In terms of assembly, homodimer. Homooligomer. Interacts with host RB1; this interaction induces dissociation of RB1-E2F1 complex thereby disrupting RB1 activity. Interacts with host EP300; this interaction represses EP300 transcriptional activity. Interacts with protein E2; this interaction inhibits E7 oncogenic activity. Interacts with host TMEM173/STING; this interaction impairs the ability of TMEM173/STING to sense cytosolic DNA and promote the production of type I interferon (IFN-alpha and IFN-beta). Highly phosphorylated.

It is found in the host cytoplasm. The protein localises to the host nucleus. Functionally, plays a role in viral genome replication by driving entry of quiescent cells into the cell cycle. Stimulation of progression from G1 to S phase allows the virus to efficiently use the cellular DNA replicating machinery to achieve viral genome replication. E7 protein has both transforming and trans-activating activities. Induces the disassembly of the E2F1 transcription factor from RB1, with subsequent transcriptional activation of E2F1-regulated S-phase genes. Interferes with host histone deacetylation mediated by HDAC1 and HDAC2, leading to transcription activation. Also plays a role in the inhibition of both antiviral and antiproliferative functions of host interferon alpha. Interaction with host TMEM173/STING impairs the ability of TMEM173/STING to sense cytosolic DNA and promote the production of type I interferon (IFN-alpha and IFN-beta). The sequence is that of Protein E7 from Homo sapiens (Human).